We begin with the raw amino-acid sequence, 548 residues long: Acetolactate synthase isozyme 2 large subunit (548 aa).

E47 is a binding site for thiamine diphosphate. FAD-binding positions include R149, 251–272 (HGTK…VGAR), and 294–313 (DIDP…LQGD). Positions 377 to 457 (QHQMWAAQHI…LKIVLLDNQR (81 aa)) are thiamine pyrophosphate binding. Residues D428 and N455 each contribute to the Mg(2+) site.

The protein belongs to the TPP enzyme family. Tetramer of two large (IlvG) and two small (IlvM) chains. FAD is required as a cofactor. It depends on Mg(2+) as a cofactor. The cofactor is thiamine diphosphate.

It catalyses the reaction 2 pyruvate + H(+) = (2S)-2-acetolactate + CO2. Its pathway is amino-acid biosynthesis; L-isoleucine biosynthesis; L-isoleucine from 2-oxobutanoate: step 1/4. It functions in the pathway amino-acid biosynthesis; L-valine biosynthesis; L-valine from pyruvate: step 1/4. Inhibited by the herbicides chlorimuron ethyl, chlorsulfuron and imazapyr. In terms of biological role, catalyzes the first step in the biosynthesis of branched-chain amino acids. This chain is Acetolactate synthase isozyme 2 large subunit (ilvG), found in Escherichia coli (strain K12).